The sequence spans 1360 residues: KN motif and ankyrin repeat domains 1 (1360 aa).

Residues 30-68 (PYFVETPYGFQLDLDFVKYVDDIQKGNTIKKLNIQKRRK) form a KN motif; Interaction with TLN1 region. The short motif at 41 to 44 (LDLD) is the Important for binding to TLN1 element. Residues 43–52 (LDFVKYVDDI) carry the Nuclear export signal 1 (NES 1) motif. A Nuclear localization signal 1 (NLS 1) motif is present at residues 65 to 68 (KRRK). The interval 66–103 (RRKPSVPCPEVRAIPGHQGVWTSTESLSSSNSDDSKQC) is disordered. A compositionally biased stretch (low complexity) spans 88–103 (STESLSSSNSDDSKQC). Positions 125–134 (LETSPTFAVS) match the Nuclear export signal 2 (NES 2) motif. Position 186 is a phosphoserine (serine 186). Residues 221–253 (DYNSYVPAAPTTSSMGSSVRHSPLSSGISTPVT) form a disordered region. The segment covering 230–253 (PTTSSMGSSVRHSPLSSGISTPVT) has biased composition (polar residues). The interaction with PPFIBP1 stretch occupies residues 244 to 339 (LSSGISTPVT…SQLELLARAR (96 aa)). Positions 260–311 (LQHIREQMAIALKRLKELEEQVRTIPVLQVKISVLQEEKRQLASQLKSQRAS) form a coiled coil. Residue serine 325 is modified to Phosphoserine. Coiled coils occupy residues 367 to 394 (FRQL…ELRE) and 453 to 487 (ITEA…TTHD). The Nuclear export signal 3 (NES 3) motif lies at 618–627 (LTLLKTNLNL). 2 disordered regions span residues 929–954 (SQPE…MQGS) and 983–1053 (IMKK…DTRG). 2 stretches are compositionally biased toward basic and acidic residues: residues 938 to 947 (AEGKHSRGHE) and 985 to 995 (KKSDGNKDSNG). The short motif at 985–998 (KKSDGNKDSNGAKK) is the Nuclear localization signal 2 (NLS 2) element. Low complexity predominate over residues 1010 to 1025 (ETTSSDESSSDGSSSS). Residues 1026-1047 (ESDDECDTIGYPPEEEEEEEEK) are compositionally biased toward acidic residues. The interval 1081–1360 (EPEKEEIRER…PGPTHRGSFD (280 aa)) is interaction with KIF21A. The stretch at 1117–1154 (KDMRICLNTLQHDWFRVSSQKSAVPAMVGDYIAAFEAV) is one ANK 0; degenerate repeat. ANK repeat units follow at residues 1169–1199 (NGNT…NVDH), 1203–1236 (AGYT…DVNA), 1241–1270 (AGQT…DVNI), 1274–1306 (EGST…HLED), and 1308–1337 (DGST…FSKA). Residues 1337 to 1360 (AQSPSTPRLGRKTSPGPTHRGSFD) are disordered.

As to quaternary structure, part of a cortical microtubule stabilization complex (CMSC) composed of KANK1, PPFIA1, PPFIBP1, ERC1/ELKS, PHLDB2/LL5beta, CLASPs, KIF21A and possibly additional interactors; within CMSCs KANK1 and PHLDB2/LL5beta appear to be the core components for targeting of microtubule-binding proteins KIF21A and CLASPs, whereas PPFIA1, PPFIBP1 and ERC1/ELKS serve as scaffolds for protein clustering. Interacts (via KN motif) with TLN1 (via R7 domain); this mediates CMSC clustering around focal adhesions. Interacts (via CC1 domain, residues 244-339) with PPFIBP1. Interacts (via ANK repeats 1-5) with KIF21A (via residues 1142-1169). Interacts with YWHAQ; the interaction requires KANK1 phosphorylation at Ser-325 and is enhanced by growth factor stimulation. Interacts with YWHAB, YWHAG, YWHAE, YWHAH, YWHAZ and SFN; the interaction requires KANK1 phosphorylation at Ser-325. Interacts with ARFGEF1; however, colocalization cannot be experimentally confirmed. Interacts with BAIAP2. Interacts with CTNNB1. Interacts (via coiled coil domain) with DAAM1 (via coiled coil domain).

It is found in the cytoplasm. The protein resides in the cell cortex. Its subcellular location is the cell projection. It localises to the ruffle membrane. The protein localises to the nucleus. Functionally, adapter protein that links structural and signaling protein complexes positioned to guide microtubule and actin cytoskeleton dynamics during cell morphogenesis. At focal adhesions (FAs) rims, organizes cortical microtubule stabilizing complexes (CMSCs) and directly interacts with major FA component TLN1, forming macromolecular assemblies positioned to control microtubule-actin crosstalk at the cell edge. Recruits KIF21A in CMSCs at axonal growth cones and regulates axon guidance by suppressing microtubule growth without inducing microtubule disassembly once it reaches the cell cortex. Interacts with ARFGEF1 and participates in establishing microtubule-organizing center (MTOC) orientation and directed cell movement in wound healing. Regulates actin stress fiber formation and cell migration by inhibiting RHOA activation in response to growth factors; this function involves phosphorylation through PI3K/Akt signaling and may depend on the competitive interaction with 14-3-3 adapter proteins to sequester them from active complexes. Inhibits the formation of lamellipodia but not of filopodia; this function may depend on the competitive interaction with BAIAP2 to block its association with activated RAC1. Inhibits fibronectin-mediated cell spreading; this function is partially mediated by BAIAP2. In the nucleus, is involved in beta-catenin-dependent activation of transcription. During cell division, may regulate DAAM1-dependent RHOA activation that signals centrosome maturation and chromosomal segregation. May also be involved in contractile ring formation during cytokinesis. Potential tumor suppressor for renal cell carcinoma. The sequence is that of KN motif and ankyrin repeat domains 1 from Mus musculus (Mouse).